An 880-amino-acid polypeptide reads, in one-letter code: Valine--tRNA ligase (880 aa).

The 'HIGH' region motif lies at 48–58 (PNITGKLHLGH). A 'KMSKS' region motif is present at residues 527–531 (KMSKS). Lys-530 is a binding site for ATP. 2 coiled-coil regions span residues 717–741 (KEELKNEEVEKKMSHVIEAIKAIRN) and 810–880 (LFDL…KSLK).

This sequence belongs to the class-I aminoacyl-tRNA synthetase family. ValS type 1 subfamily. In terms of assembly, monomer.

It is found in the cytoplasm. The enzyme catalyses tRNA(Val) + L-valine + ATP = L-valyl-tRNA(Val) + AMP + diphosphate. Catalyzes the attachment of valine to tRNA(Val). As ValRS can inadvertently accommodate and process structurally similar amino acids such as threonine, to avoid such errors, it has a 'posttransfer' editing activity that hydrolyzes mischarged Thr-tRNA(Val) in a tRNA-dependent manner. The polypeptide is Valine--tRNA ligase (Clostridium tetani (strain Massachusetts / E88)).